The primary structure comprises 205 residues: Molybdenum cofactor guanylyltransferase (205 aa).

GTP-binding positions include 14–16 (LAG), Lys27, Asp77, and Asp107. Asp107 lines the Mg(2+) pocket.

The protein belongs to the MobA family. Monomer. It depends on Mg(2+) as a cofactor.

The protein localises to the cytoplasm. The catalysed reaction is Mo-molybdopterin + GTP + H(+) = Mo-molybdopterin guanine dinucleotide + diphosphate. Its function is as follows. Transfers a GMP moiety from GTP to Mo-molybdopterin (Mo-MPT) cofactor (Moco or molybdenum cofactor) to form Mo-molybdopterin guanine dinucleotide (Mo-MGD) cofactor. This Burkholderia orbicola (strain MC0-3) protein is Molybdenum cofactor guanylyltransferase.